Reading from the N-terminus, the 362-residue chain is Anthranilate phosphoribosyltransferase (362 aa).

5-phospho-alpha-D-ribose 1-diphosphate is bound by residues Gly-96, 99 to 100, Thr-104, 106 to 109, 124 to 132, and Gly-136; these read GD, NIST, and KHGNRAASS. Gly-96 contacts anthranilate. Ser-108 is a Mg(2+) binding site. Asn-127 lines the anthranilate pocket. An anthranilate-binding site is contributed by Arg-182. The Mg(2+) site is built by Asp-240 and Glu-241.

The protein belongs to the anthranilate phosphoribosyltransferase family. Homodimer. Mg(2+) is required as a cofactor.

The catalysed reaction is N-(5-phospho-beta-D-ribosyl)anthranilate + diphosphate = 5-phospho-alpha-D-ribose 1-diphosphate + anthranilate. It participates in amino-acid biosynthesis; L-tryptophan biosynthesis; L-tryptophan from chorismate: step 2/5. Catalyzes the transfer of the phosphoribosyl group of 5-phosphorylribose-1-pyrophosphate (PRPP) to anthranilate to yield N-(5'-phosphoribosyl)-anthranilate (PRA). This Rhodococcus jostii (strain RHA1) protein is Anthranilate phosphoribosyltransferase.